Here is a 212-residue protein sequence, read N- to C-terminus: Peptidyl-prolyl cis-trans isomerase-like 3 (212 aa).

The PPIase cyclophilin-type domain maps to 1–198; that stretch reads MSVTLHTTHG…EGEEGGYEAI (198 aa).

It belongs to the cyclophilin-type PPIase family. PPIL3 subfamily.

It carries out the reaction [protein]-peptidylproline (omega=180) = [protein]-peptidylproline (omega=0). Its function is as follows. PPIases accelerate the folding of proteins. It catalyzes the cis-trans isomerization of proline imidic peptide bonds in oligopeptides. This Aspergillus fumigatus (strain ATCC MYA-4609 / CBS 101355 / FGSC A1100 / Af293) (Neosartorya fumigata) protein is Peptidyl-prolyl cis-trans isomerase-like 3 (cyp10).